Reading from the N-terminus, the 175-residue chain is Adenine phosphoribosyltransferase (175 aa).

Belongs to the purine/pyrimidine phosphoribosyltransferase family. In terms of assembly, homodimer.

The protein resides in the cytoplasm. It catalyses the reaction AMP + diphosphate = 5-phospho-alpha-D-ribose 1-diphosphate + adenine. It participates in purine metabolism; AMP biosynthesis via salvage pathway; AMP from adenine: step 1/1. Its function is as follows. Catalyzes a salvage reaction resulting in the formation of AMP, that is energically less costly than de novo synthesis. The sequence is that of Adenine phosphoribosyltransferase from Lactobacillus johnsonii (strain CNCM I-12250 / La1 / NCC 533).